The following is a 226-amino-acid chain: 8-oxoguanine DNA glycosylase/AP lyase (226 aa).

Residues lysine 149 and aspartate 167 contribute to the active site.

It belongs to the type-2 OGG1 family.

It carries out the reaction 2'-deoxyribonucleotide-(2'-deoxyribose 5'-phosphate)-2'-deoxyribonucleotide-DNA = a 3'-end 2'-deoxyribonucleotide-(2,3-dehydro-2,3-deoxyribose 5'-phosphate)-DNA + a 5'-end 5'-phospho-2'-deoxyribonucleoside-DNA + H(+). Its function is as follows. Catalyzes the excision of an oxidatively damaged form of guanine (7,8-dihydro-8-oxoguanine = 8-oxoG) from DNA. Also cleaves the DNA backbone at apurinic/apyrimidinic sites (AP sites). In Aquifex aeolicus (strain VF5), this protein is 8-oxoguanine DNA glycosylase/AP lyase.